Here is a 1088-residue protein sequence, read N- to C-terminus: RNA-directed RNA polymerase (1088 aa).

In terms of domain architecture, RdRp catalytic spans 501 to 687; sequence LSYGDVTRFL…AKRYIAGGKI (187 aa).

Belongs to the reoviridae RNA-directed RNA polymerase family. As to quaternary structure, interacts with VP3 (Potential). Interacts with VP2; this interaction activates VP1. Interacts with NSP5; this interaction is probably necessary for the formation of functional virus factories. Interacts with NSP2; this interaction is weak. The cofactor is Mg(2+).

The protein localises to the virion. The catalysed reaction is RNA(n) + a ribonucleoside 5'-triphosphate = RNA(n+1) + diphosphate. In terms of biological role, RNA-directed RNA polymerase that is involved in both transcription and genome replication. Together with VP3 capping enzyme, forms an enzyme complex positioned near the channels situated at each of the five-fold vertices of the core. Following infection, the outermost layer of the virus is lost, leaving a double-layered particle (DLP) made up of the core and VP6 shell. VP1 then catalyzes the transcription of fully conservative plus-strand genomic RNAs that are extruded through the DLP's channels into the cytoplasm where they function as mRNAs for translation of viral proteins. One copy of each of the viral (+)RNAs is also recruited during core assembly, together with newly synthesized polymerase complexes and VP2. The polymerase of these novo-formed particles catalyzes the synthesis of complementary minus-strands leading to dsRNA formation. To do so, the polymerase specifically recognizes and binds 4 bases 5'-UGUG-3' in the conserved 3'-sequence of plus-strand RNA templates. VP2 presumably activates the autoinhibited VP1-RNA complex to coordinate packaging and genome replication. Once dsRNA synthesis is complete, the polymerase switches to the transcriptional mode, thus providing secondary transcription. The sequence is that of RNA-directed RNA polymerase from Homo sapiens (Human).